We begin with the raw amino-acid sequence, 227 residues long: Ribosomal RNA large subunit methyltransferase E (227 aa).

Positions 78, 80, 103, 119, and 143 each coordinate S-adenosyl-L-methionine. Residue lysine 183 is the Proton acceptor of the active site.

This sequence belongs to the class I-like SAM-binding methyltransferase superfamily. RNA methyltransferase RlmE family.

The protein resides in the cytoplasm. The catalysed reaction is uridine(2552) in 23S rRNA + S-adenosyl-L-methionine = 2'-O-methyluridine(2552) in 23S rRNA + S-adenosyl-L-homocysteine + H(+). In terms of biological role, specifically methylates the uridine in position 2552 of 23S rRNA at the 2'-O position of the ribose in the fully assembled 50S ribosomal subunit. In Rickettsia typhi (strain ATCC VR-144 / Wilmington), this protein is Ribosomal RNA large subunit methyltransferase E.